We begin with the raw amino-acid sequence, 103 residues long: Large ribosomal subunit protein bL21 (103 aa).

The protein belongs to the bacterial ribosomal protein bL21 family. Part of the 50S ribosomal subunit. Contacts protein L20.

Functionally, this protein binds to 23S rRNA in the presence of protein L20. The sequence is that of Large ribosomal subunit protein bL21 from Nautilia profundicola (strain ATCC BAA-1463 / DSM 18972 / AmH).